Consider the following 214-residue polypeptide: Imidazole glycerol phosphate synthase subunit HisH (214 aa).

The region spanning 3–211 is the Glutamine amidotransferase type-1 domain; sequence IIAVIDYDMG…VEQVQATLAT (209 aa). Cys81 (nucleophile) is an active-site residue. Residues His186 and Glu188 contribute to the active site.

As to quaternary structure, heterodimer of HisH and HisF.

The protein resides in the cytoplasm. It carries out the reaction 5-[(5-phospho-1-deoxy-D-ribulos-1-ylimino)methylamino]-1-(5-phospho-beta-D-ribosyl)imidazole-4-carboxamide + L-glutamine = D-erythro-1-(imidazol-4-yl)glycerol 3-phosphate + 5-amino-1-(5-phospho-beta-D-ribosyl)imidazole-4-carboxamide + L-glutamate + H(+). The catalysed reaction is L-glutamine + H2O = L-glutamate + NH4(+). Its pathway is amino-acid biosynthesis; L-histidine biosynthesis; L-histidine from 5-phospho-alpha-D-ribose 1-diphosphate: step 5/9. In terms of biological role, IGPS catalyzes the conversion of PRFAR and glutamine to IGP, AICAR and glutamate. The HisH subunit catalyzes the hydrolysis of glutamine to glutamate and ammonia as part of the synthesis of IGP and AICAR. The resulting ammonia molecule is channeled to the active site of HisF. The protein is Imidazole glycerol phosphate synthase subunit HisH of Acaryochloris marina (strain MBIC 11017).